The sequence spans 255 residues: Probable transcriptional regulatory protein PCC7424_2775 (255 aa).

Belongs to the TACO1 family.

It localises to the cytoplasm. The chain is Probable transcriptional regulatory protein PCC7424_2775 from Gloeothece citriformis (strain PCC 7424) (Cyanothece sp. (strain PCC 7424)).